A 37-amino-acid chain; its full sequence is Gene 40 protein (37 aa).

This is Gene 40 protein (40) from Mycobacterium phage L5 (Mycobacteriophage L5).